The chain runs to 376 residues: Thymidine kinase (376 aa).

A disordered region spans residues 1-44 (MASYPGHQHASAFDQAARSRGHSNRRTALRPRRQQEATEVRPEQ). Residues 19–32 (SRGHSNRRTALRPR) are compositionally biased toward basic residues. The segment covering 33–44 (RQQEATEVRPEQ) has biased composition (basic and acidic residues). 56–63 (GPHGMGKT) is an ATP binding site. Catalysis depends on Glu83, which acts as the Proton acceptor. The substrate site is built by Tyr101 and Gln125. Residue Arg216 participates in ATP binding. Arg222 lines the substrate pocket. Residues 260–280 (GQLSGTAVPPQGAEPQSNAGP) are disordered.

This sequence belongs to the herpesviridae thymidine kinase family. Homodimer.

The catalysed reaction is thymidine + ATP = dTMP + ADP + H(+). Its function is as follows. Catalyzes the transfer of the gamma-phospho group of ATP to thymidine to generate dTMP in the salvage pathway of pyrimidine synthesis. The dTMP serves as a substrate for DNA polymerase during viral DNA replication. Allows the virus to be reactivated and to grow in non-proliferative cells lacking a high concentration of phosphorylated nucleic acid precursors. This Human herpesvirus 1 (strain HFEM) (HHV-1) protein is Thymidine kinase.